We begin with the raw amino-acid sequence, 1184 residues long: Cartilage intermediate layer protein 1 (1184 aa).

An N-terminal signal peptide occupies residues 1–21 (MAAIKTWVFSFLVLEVTTVLG). N-linked (GlcNAc...) asparagine glycosylation is found at N129 and N132. The TSP type-1 domain occupies 150-201 (HIWSSWSPWSKCSAACGHTGVQTRTRTCLAQTVSLCSEATEEGQLCMSQACT). 4 cysteine pairs are disulfide-bonded: C161–C195, C165–C200, C177–C185, and C330–C376. In terms of domain architecture, Ig-like C2-type spans 309–393 (PYIVMNPEMK…AVKSKVTQLT (85 aa)). N-linked (GlcNAc...) asparagine glycans are attached at residues N346, N420, N550, N631, N1000, and N1056. Residues 1138 to 1184 (ARSPATGTVQGRVPAMRQQRASRGGLRRRGSMAPLRFSGVAQQPLSN) form a disordered region.

In terms of assembly, monomer. Interacts with TGFB1. Post-translationally, cleaved into 2 chains possibly by a furin-like protease upon or preceding secretion. As to expression, expressed in articular and meniscal cartilage (at protein level). Primarily localizes to the superficial and intermediate zones of articular cartilage (at protein level).

Its subcellular location is the secreted. It is found in the extracellular space. It localises to the extracellular matrix. Functionally, probably plays a role in cartilage scaffolding. May act by antagonizing TGF-beta1 (TGFB1) and IGF1 functions. Has the ability to suppress IGF1-induced proliferation and sulfated proteoglycan synthesis, and inhibits ligand-induced IGF1R autophosphorylation. May inhibit TGFB1-mediated induction of cartilage matrix genes via its interaction with TGFB1. Overexpression may lead to impair chondrocyte growth and matrix repair and indirectly promote inorganic pyrophosphate (PPi) supersaturation in aging and osteoarthritis cartilage. The sequence is that of Cartilage intermediate layer protein 1 (Cilp) from Mus musculus (Mouse).